The primary structure comprises 964 residues: Fanconi-associated nuclease 1 homolog (964 aa).

Residues 31–56 are disordered; it reads SRSLQDDAADAEREAAAGGSSSGGGD. Residues 63–92 form a UBZ4-type zinc finger; the sequence is WVACPVCGESIRGTDYCVNTHLDICLTRGT. Zn(2+)-binding residues include Cys66, Cys69, His83, and Cys87. Residues Glu786, Asp907, Glu926, and Val927 each coordinate Mn(2+). Positions 844 to 958 constitute a VRR-NUC domain; the sequence is GIAEEILISS…GFDVEVCKVS (115 aa).

This sequence belongs to the FAN1 family. It depends on Mn(2+) as a cofactor. Mg(2+) serves as cofactor.

It carries out the reaction Hydrolytically removes 5'-nucleotides successively from the 3'-hydroxy termini of 3'-hydroxy-terminated oligonucleotides.. In terms of biological role, nuclease required for the repair of DNA interstrand cross-links (ICL). Acts as a 5'-3' exonuclease that anchors at a cut end of DNA and cleaves DNA successively at every third nucleotide, allowing to excise an ICL from one strand through flanking incisions. This chain is Fanconi-associated nuclease 1 homolog, found in Oryza sativa subsp. japonica (Rice).